We begin with the raw amino-acid sequence, 35 residues long: Mu-theraphotoxin-Ca2a (35 aa).

Intrachain disulfides connect Cys-2–Cys-17, Cys-9–Cys-24, and Cys-16–Cys-31.

The protein belongs to the neurotoxin 10 (Hwtx-1) family. 10 (haplotoxin-1) subfamily. As to expression, expressed by the venom gland.

Its subcellular location is the secreted. Potently inhibits Nav1.7/SCN9A (IC(50)=98.1 nM), and moderately inhibits Nav1.2/SCN2A (IC(50)=216.3 nM), Nav1.6/SCN8A (IC(50)=313.6 nM), and Nav1.3/SCN3A (IC(50)=491.3 nM). Hyperpolarizes the slow inactivation, but does not alter the voltage-dependent activation or fast inactivation of Nav1.7/SCN9A. Binds with Nav1.7/SCN9A at the extracellular S3-S4 linker of domain II (site 4). In vivo, exhibits dose-dependent analgesic efficacy by reducing pain responses in rodent models of formalin-induced paw licking, hot plate test, and acetic acid-induced writhing. The chain is Mu-theraphotoxin-Ca2a from Cyriopagopus albostriatus (Cambodian tiger tarantula).